Consider the following 174-residue polypeptide: NAD(P)H-quinone oxidoreductase subunit J (174 aa).

The protein belongs to the complex I 30 kDa subunit family. NDH-1 can be composed of about 15 different subunits; different subcomplexes with different compositions have been identified which probably have different functions.

It is found in the cellular thylakoid membrane. It catalyses the reaction a plastoquinone + NADH + (n+1) H(+)(in) = a plastoquinol + NAD(+) + n H(+)(out). The enzyme catalyses a plastoquinone + NADPH + (n+1) H(+)(in) = a plastoquinol + NADP(+) + n H(+)(out). Functionally, NDH-1 shuttles electrons from an unknown electron donor, via FMN and iron-sulfur (Fe-S) centers, to quinones in the respiratory and/or the photosynthetic chain. The immediate electron acceptor for the enzyme in this species is believed to be plastoquinone. Couples the redox reaction to proton translocation, and thus conserves the redox energy in a proton gradient. Cyanobacterial NDH-1 also plays a role in inorganic carbon-concentration. This is NAD(P)H-quinone oxidoreductase subunit J from Picosynechococcus sp. (strain ATCC 27264 / PCC 7002 / PR-6) (Agmenellum quadruplicatum).